The primary structure comprises 890 residues: DNA mismatch repair protein MutS (890 aa).

634–641 (GPNMGGKS) contributes to the ATP binding site.

Belongs to the DNA mismatch repair MutS family.

In terms of biological role, this protein is involved in the repair of mismatches in DNA. It is possible that it carries out the mismatch recognition step. This protein has a weak ATPase activity. This is DNA mismatch repair protein MutS from Burkholderia pseudomallei (strain 1710b).